The chain runs to 217 residues: Pyridoxine/pyridoxamine 5'-phosphate oxidase (217 aa).

Residues 13 to 16 (RRDY) and K71 each bind substrate. FMN contacts are provided by residues 66-71 (RIVLLK), 81-82 (YT), K88, and Q110. Positions 128, 132, and 136 each coordinate substrate. FMN-binding positions include 145–146 (QS) and W190. A substrate-binding site is contributed by 196 to 198 (RLH). Residue R200 coordinates FMN.

Belongs to the pyridoxamine 5'-phosphate oxidase family. As to quaternary structure, homodimer. The cofactor is FMN.

It catalyses the reaction pyridoxamine 5'-phosphate + O2 + H2O = pyridoxal 5'-phosphate + H2O2 + NH4(+). The enzyme catalyses pyridoxine 5'-phosphate + O2 = pyridoxal 5'-phosphate + H2O2. Its pathway is cofactor metabolism; pyridoxal 5'-phosphate salvage; pyridoxal 5'-phosphate from pyridoxamine 5'-phosphate: step 1/1. The protein operates within cofactor metabolism; pyridoxal 5'-phosphate salvage; pyridoxal 5'-phosphate from pyridoxine 5'-phosphate: step 1/1. Functionally, catalyzes the oxidation of either pyridoxine 5'-phosphate (PNP) or pyridoxamine 5'-phosphate (PMP) into pyridoxal 5'-phosphate (PLP). This Edwardsiella ictaluri (strain 93-146) protein is Pyridoxine/pyridoxamine 5'-phosphate oxidase.